Here is a 478-residue protein sequence, read N- to C-terminus: Ribulose bisphosphate carboxylase large chain (478 aa).

Positions 1 to 2 (MS) are excised as a propeptide. The residue at position 3 (Pro3) is an N-acetylproline. N6,N6,N6-trimethyllysine is present on Lys14. Substrate contacts are provided by Asn123 and Thr173. The active-site Proton acceptor is the Lys175. Lys177 provides a ligand contact to substrate. Residues Lys201, Asp203, and Glu204 each contribute to the Mg(2+) site. An N6-carboxylysine modification is found at Lys201. Catalysis depends on His294, which acts as the Proton acceptor. 3 residues coordinate substrate: Arg295, His327, and Ser379.

This sequence belongs to the RuBisCO large chain family. Type I subfamily. In terms of assembly, heterohexadecamer of 8 large chains and 8 small chains; disulfide-linked. The disulfide link is formed within the large subunit homodimers. It depends on Mg(2+) as a cofactor. Post-translationally, the disulfide bond which can form in the large chain dimeric partners within the hexadecamer appears to be associated with oxidative stress and protein turnover.

The protein localises to the plastid. It is found in the chloroplast. The catalysed reaction is 2 (2R)-3-phosphoglycerate + 2 H(+) = D-ribulose 1,5-bisphosphate + CO2 + H2O. The enzyme catalyses D-ribulose 1,5-bisphosphate + O2 = 2-phosphoglycolate + (2R)-3-phosphoglycerate + 2 H(+). Functionally, ruBisCO catalyzes two reactions: the carboxylation of D-ribulose 1,5-bisphosphate, the primary event in carbon dioxide fixation, as well as the oxidative fragmentation of the pentose substrate in the photorespiration process. Both reactions occur simultaneously and in competition at the same active site. The chain is Ribulose bisphosphate carboxylase large chain from Lemna minor (Common duckweed).